A 378-amino-acid chain; its full sequence is Alcohol dehydrogenase class-3 (378 aa).

An N-acetylalanine modification is found at Ala-1. Cys-46 is a binding site for Zn(2+). His-47 lines the NAD(+) pocket. An alcohol-binding residues include Thr-48 and His-68. 7 residues coordinate Zn(2+): His-68, Glu-69, Cys-98, Cys-101, Cys-104, Cys-112, and Cys-176. Residues 201-206 (GLGTVG), Asp-225, Lys-230, 294-296 (VGV), 319-321 (TAF), and Arg-371 contribute to the NAD(+) site.

This sequence belongs to the zinc-containing alcohol dehydrogenase family. Class-III subfamily. Homodimer. It depends on Zn(2+) as a cofactor.

Its subcellular location is the cytoplasm. The enzyme catalyses a primary alcohol + NAD(+) = an aldehyde + NADH + H(+). The catalysed reaction is a secondary alcohol + NAD(+) = a ketone + NADH + H(+). It catalyses the reaction S-(hydroxymethyl)glutathione + NADP(+) = S-formylglutathione + NADPH + H(+). It carries out the reaction S-(hydroxymethyl)glutathione + NAD(+) = S-formylglutathione + NADH + H(+). Functionally, class-III ADH is remarkably ineffective in oxidizing ethanol, but it readily catalyzes the oxidation of long-chain primary alcohols and the oxidation of S-(hydroxymethyl) glutathione. In Pisum sativum (Garden pea), this protein is Alcohol dehydrogenase class-3.